The chain runs to 345 residues: Protein RecA (345 aa).

Glycine 67–threonine 74 is an ATP binding site.

It belongs to the RecA family.

The protein localises to the cytoplasm. Can catalyze the hydrolysis of ATP in the presence of single-stranded DNA, the ATP-dependent uptake of single-stranded DNA by duplex DNA, and the ATP-dependent hybridization of homologous single-stranded DNAs. It interacts with LexA causing its activation and leading to its autocatalytic cleavage. This Acidothermus cellulolyticus (strain ATCC 43068 / DSM 8971 / 11B) protein is Protein RecA.